A 523-amino-acid polypeptide reads, in one-letter code: 2-isopropylmalate synthase (523 aa).

The region spanning 5–267 (VIIFDTTLRD…HTAINHQEIW (263 aa)) is the Pyruvate carboxyltransferase domain. Mn(2+) contacts are provided by aspartate 14, histidine 202, histidine 204, and asparagine 238. The regulatory domain stretch occupies residues 392-523 (RLDYFSVQSG…QHNENNKETV (132 aa)).

It belongs to the alpha-IPM synthase/homocitrate synthase family. LeuA type 1 subfamily. As to quaternary structure, homodimer. Mn(2+) serves as cofactor.

It localises to the cytoplasm. It catalyses the reaction 3-methyl-2-oxobutanoate + acetyl-CoA + H2O = (2S)-2-isopropylmalate + CoA + H(+). It participates in amino-acid biosynthesis; L-leucine biosynthesis; L-leucine from 3-methyl-2-oxobutanoate: step 1/4. In terms of biological role, catalyzes the condensation of the acetyl group of acetyl-CoA with 3-methyl-2-oxobutanoate (2-ketoisovalerate) to form 3-carboxy-3-hydroxy-4-methylpentanoate (2-isopropylmalate). The sequence is that of 2-isopropylmalate synthase from Shigella flexneri.